A 140-amino-acid polypeptide reads, in one-letter code: Large ribosomal subunit protein uL11 (140 aa).

Belongs to the universal ribosomal protein uL11 family. Part of the ribosomal stalk of the 50S ribosomal subunit. Interacts with L10 and the large rRNA to form the base of the stalk. L10 forms an elongated spine to which L12 dimers bind in a sequential fashion forming a multimeric L10(L12)X complex. In terms of processing, one or more lysine residues are methylated.

Its function is as follows. Forms part of the ribosomal stalk which helps the ribosome interact with GTP-bound translation factors. This chain is Large ribosomal subunit protein uL11, found in Nitratidesulfovibrio vulgaris (strain ATCC 29579 / DSM 644 / CCUG 34227 / NCIMB 8303 / VKM B-1760 / Hildenborough) (Desulfovibrio vulgaris).